Reading from the N-terminus, the 293-residue chain is 4-hydroxy-tetrahydrodipicolinate synthase (293 aa).

Residue T46 coordinates pyruvate. Y133 functions as the Proton donor/acceptor in the catalytic mechanism. K161 serves as the catalytic Schiff-base intermediate with substrate. V202 is a pyruvate binding site.

It belongs to the DapA family. As to quaternary structure, homotetramer; dimer of dimers.

Its subcellular location is the cytoplasm. It catalyses the reaction L-aspartate 4-semialdehyde + pyruvate = (2S,4S)-4-hydroxy-2,3,4,5-tetrahydrodipicolinate + H2O + H(+). It participates in amino-acid biosynthesis; L-lysine biosynthesis via DAP pathway; (S)-tetrahydrodipicolinate from L-aspartate: step 3/4. Its function is as follows. Catalyzes the condensation of (S)-aspartate-beta-semialdehyde [(S)-ASA] and pyruvate to 4-hydroxy-tetrahydrodipicolinate (HTPA). This chain is 4-hydroxy-tetrahydrodipicolinate synthase, found in Wolbachia pipientis subsp. Culex pipiens (strain wPip).